Here is a 226-residue protein sequence, read N- to C-terminus: AN1-type zinc finger protein 3 homolog (226 aa).

The segment at 12–44 (PSLPPRCPCGFWGSSKTMNLCSKCFADFQKKQP) adopts an A20-type zinc-finger fold. Residues Cys18, Cys20, Cys32, and Cys35 each contribute to the Zn(2+) site. Residues 42 to 149 (KQPDEDTAPS…DRPDNSSRSK (108 aa)) are disordered. Composition is skewed to polar residues over residues 49 to 59 (APSTSSSQSDL), 67 to 92 (DNGN…NVDS), and 105 to 114 (AHVSLTTPSK). The segment covering 134–146 (RLLDSGDRPDNSS) has biased composition (basic and acidic residues). Residues 150–199 (QKSRRRCFRCQIKLELVQQELGSCRCGYVFCMLHRLPEQHDCTFDHMGRG) form an AN1-type zinc finger. Zn(2+) is bound by residues Cys156, Cys159, Cys173, Cys175, Cys180, His183, His189, and Cys191.

In Xenopus laevis (African clawed frog), this protein is AN1-type zinc finger protein 3 homolog (zfand3).